The chain runs to 190 residues: Corticoliberin (190 aa).

The first 24 residues, 1–24 (MRLPLLVSVGVLLVALLPSPPCRA), serve as a signal peptide directing secretion. Residues 25-147 (LLSRGPIPGA…QEAPAARKRR (123 aa)) constitute a propeptide that is removed on maturation. Disordered stretches follow at residues 33-53 (GARQ…LPQP) and 115-151 (PRRP…SQEP). Over residues 41–53 (PQPLSFFQPLPQP) the composition is skewed to low complexity. Alanine amide is present on A188.

The protein belongs to the sauvagine/corticotropin-releasing factor/urotensin I family. As to quaternary structure, interacts (via C-terminus) with CRFR1 (via N-terminal extracellular domain). In terms of tissue distribution, produced by the hypothalamus.

The protein resides in the secreted. Hormone regulating the release of corticotropin from pituitary gland. Induces NLRP6 in intestinal epithelial cells, hence may influence gut microbiota profile. This Ovis aries (Sheep) protein is Corticoliberin (CRH).